Here is a 456-residue protein sequence, read N- to C-terminus: Phosphomannomutase (456 aa).

Ser-98 serves as the catalytic Phosphoserine intermediate. Positions 98, 245, 247, and 249 each coordinate Mg(2+).

It belongs to the phosphohexose mutase family. Mg(2+) serves as cofactor.

The catalysed reaction is alpha-D-mannose 1-phosphate = D-mannose 6-phosphate. Its pathway is nucleotide-sugar biosynthesis; GDP-alpha-D-mannose biosynthesis; alpha-D-mannose 1-phosphate from D-fructose 6-phosphate: step 2/2. It participates in bacterial outer membrane biogenesis; LPS O-antigen biosynthesis. In terms of biological role, involved in GDP-mannose biosynthesis which serves as the activated sugar nucleotide precursor for mannose residues in cell surface polysaccharides. This enzyme participates in synthesis of the LPS O antigen. The sequence is that of Phosphomannomutase (manB) from Salmonella montevideo.